Consider the following 964-residue polypeptide: Translation initiation factor IF-2 (964 aa).

The disordered stretch occupies residues 26-375 (AAGVSKRSPE…QNNQHAFQAP (350 aa)). Basic and acidic residues-rich tracts occupy residues 49-60 (YLKRSHGAREDS), 91-103 (VRPDDAPRAEAPK), 118-154 (AKPEPKPEPKVEAKPEPKPEPKPEPKVEAKPEPKPEP), 174-206 (IAAREAEEKRQAAFRARQEALMREKIEREERRQ), 225-236 (PQREERRDDRRG), 243-252 (RGPRGNDNRG), and 328-339 (KGGERSWDDNKK). Residues 464–633 (PRSPVVTVMG…LLQAEVLELK (170 aa)) form the tr-type G domain. The segment at 473–480 (GHVDHGKT) is G1. 473-480 (GHVDHGKT) is a GTP binding site. The interval 498 to 502 (GITQH) is G2. A G3 region spans residues 519-522 (DTPG). Residues 519 to 523 (DTPGH) and 573 to 576 (NKID) contribute to the GTP site. The interval 573 to 576 (NKID) is G4. The G5 stretch occupies residues 609–611 (SAK).

It belongs to the TRAFAC class translation factor GTPase superfamily. Classic translation factor GTPase family. IF-2 subfamily.

It is found in the cytoplasm. One of the essential components for the initiation of protein synthesis. Protects formylmethionyl-tRNA from spontaneous hydrolysis and promotes its binding to the 30S ribosomal subunits. Also involved in the hydrolysis of GTP during the formation of the 70S ribosomal complex. In Chromobacterium violaceum (strain ATCC 12472 / DSM 30191 / JCM 1249 / CCUG 213 / NBRC 12614 / NCIMB 9131 / NCTC 9757 / MK), this protein is Translation initiation factor IF-2.